The sequence spans 272 residues: Alcohol dehydrogenase-related 31 kDa protein (272 aa).

An NAD(+)-binding site is contributed by 11–34 (YVADCGGIALETSKVLMTKNIAKL). A substrate-binding site is contributed by Ser-139. Tyr-152 serves as the catalytic Proton acceptor.

The protein belongs to the short-chain dehydrogenases/reductases (SDR) family.

In Drosophila mauritiana (Fruit fly), this protein is Alcohol dehydrogenase-related 31 kDa protein (Adhr).